The chain runs to 361 residues: Aromatic amino acid aminotransferase (361 aa).

An N6-(pyridoxal phosphate)lysine modification is found at K221.

It belongs to the class-II pyridoxal-phosphate-dependent aminotransferase family. In terms of assembly, homodimer. Pyridoxal 5'-phosphate is required as a cofactor.

The catalysed reaction is an aromatic L-alpha-amino acid + 2-oxoglutarate = an aromatic oxo-acid + L-glutamate. Functionally, aminotransferase that catalyzes the conversion of aromatic amino acids and 2-oxoglutarate into corresponding aromatic oxo acids and L-glutamate. This is Aromatic amino acid aminotransferase from Mycobacterium marinum (strain ATCC BAA-535 / M).